Consider the following 262-residue polypeptide: Phosphate import ATP-binding protein PstB 2 (262 aa).

Residues 18–257 (FVVRNLDLFY…PSDRRTEDYI (240 aa)) enclose the ABC transporter domain. 50-57 (GPSGCGKS) serves as a coordination point for ATP.

Belongs to the ABC transporter superfamily. Phosphate importer (TC 3.A.1.7) family. In terms of assembly, the complex is composed of two ATP-binding proteins (PstB), two transmembrane proteins (PstC and PstA) and a solute-binding protein (PstS).

The protein resides in the cell membrane. It carries out the reaction phosphate(out) + ATP + H2O = ADP + 2 phosphate(in) + H(+). Functionally, part of the ABC transporter complex PstSACB involved in phosphate import. Responsible for energy coupling to the transport system. This is Phosphate import ATP-binding protein PstB 2 from Symbiobacterium thermophilum (strain DSM 24528 / JCM 14929 / IAM 14863 / T).